Consider the following 215-residue polypeptide: 3-dehydroquinate dehydratase (215 aa).

3-dehydroquinate-binding positions include S6, 31–33 (ELR), and R64. Residue H111 is the Proton donor/acceptor of the active site. Catalysis depends on K138, which acts as the Schiff-base intermediate with substrate. R174, T193, and Q197 together coordinate 3-dehydroquinate.

It belongs to the type-I 3-dehydroquinase family. As to quaternary structure, homodimer.

It carries out the reaction 3-dehydroquinate = 3-dehydroshikimate + H2O. Its pathway is metabolic intermediate biosynthesis; chorismate biosynthesis; chorismate from D-erythrose 4-phosphate and phosphoenolpyruvate: step 3/7. Involved in the third step of the chorismate pathway, which leads to the biosynthesis of aromatic amino acids. Catalyzes the cis-dehydration of 3-dehydroquinate (DHQ) and introduces the first double bond of the aromatic ring to yield 3-dehydroshikimate. The protein is 3-dehydroquinate dehydratase of Ignicoccus hospitalis (strain KIN4/I / DSM 18386 / JCM 14125).